The chain runs to 559 residues: Non-homologous end joining factor IFFO1 (559 aa).

The disordered stretch occupies residues 21–57 (GPLGDSLGGDHFAGGGDLPPAPLSPAGPAAYSPPGPG). Residues 39–57 (PPAPLSPAGPAAYSPPGPG) show a composition bias toward pro residues. An LMNA binding region spans residues 65–116 (ALRNDLGSNINVLKTLNLRFRCFLAKVHELERRNRLLEKQLQQALEEGKQGR). The IF rod domain occupies 73 to 526 (NINVLKTLNL…RLITQSGDRK (454 aa)). A coiled-coil region spans residues 85 to 117 (RCFLAKVHELERRNRLLEKQLQQALEEGKQGRR). A disordered region spans residues 158-187 (SPARSPAGPLAPSAASLSSSSTSTSTTYSS). A coiled-coil region spans residues 237-301 (EIRALYNVLA…LKVEQLKAEL (65 aa)). The disordered stretch occupies residues 360–394 (SMGGRKRERKAAVEEDTSLSESEGPRQPDGDEEES). Residues 450 to 525 (EQEDSLEKVI…RRLITQSGDR (76 aa)) form an XCCR4 binding. Required for localization to the double-strand breaks (DSBs) region. Residues 455-501 (LEKVIKDTESLFKTREKEYQETIDQIELELATAKNDMNRHLHEYMEM) adopt a coiled-coil conformation. Positions 520–559 (TQSGDRKSPAFTAVPLSDPPPPPSEAEDSDRDVSSDSSMR) are disordered. Residues 550 to 559 (RDVSSDSSMR) show a composition bias toward basic and acidic residues.

The protein belongs to the intermediate filament family. As to quaternary structure, forms a heterotetramer with XRCC4. The interaction with XRCC4 is direct, involves LIG4-free XRCC4 and leads to relocalization of IFFO1 at the double-strand break (DSB) sites. Interacts with LMNA; the interaction forms an interior nucleoskeleton and the recruitment to DNA double-strand breaks. Ubiquitously expressed.

The protein localises to the nucleus. It is found in the nucleoplasm. Its subcellular location is the nucleus inner membrane. It localises to the nucleus matrix. Nuclear matrix protein involved in the immobilization of broken DNA ends and the suppression of chromosome translocation during DNA double-strand breaks (DSBs). Interacts with the nuclear lamina component LMNA, resulting in the formation of a nucleoskeleton that relocalizes to the DSB sites in a XRCC4-dependent manner and promotes the immobilization of the broken ends, thereby preventing chromosome translocation. Acts as a scaffold that allows the DNA repair protein XRCC4 and LMNA to assemble into a complex at the DSB sites. This chain is Non-homologous end joining factor IFFO1, found in Homo sapiens (Human).